The chain runs to 944 residues: UvrABC system protein A (944 aa).

33-40 (GLSGSGKS) is a binding site for ATP. Residues 252 to 279 (CPICGFSIGELEPRMFSFNSPFGACPTC) form a C4-type zinc finger. 2 ABC transporter domains span residues 309–587 (WEPT…KKSL) and 607–935 (ITDR…QYLK). 639 to 646 (GVSGSGKS) lines the ATP pocket. A C4-type zinc finger spans residues 738–764 (CEACKGDGIIKIEMHFLPDVYVPCEVC).

It belongs to the ABC transporter superfamily. UvrA family. In terms of assembly, forms a heterotetramer with UvrB during the search for lesions.

The protein resides in the cytoplasm. The UvrABC repair system catalyzes the recognition and processing of DNA lesions. UvrA is an ATPase and a DNA-binding protein. A damage recognition complex composed of 2 UvrA and 2 UvrB subunits scans DNA for abnormalities. When the presence of a lesion has been verified by UvrB, the UvrA molecules dissociate. This is UvrABC system protein A from Staphylococcus epidermidis (strain ATCC 12228 / FDA PCI 1200).